Here is a 367-residue protein sequence, read N- to C-terminus: Glutamate 5-kinase (367 aa).

K10 is an ATP binding site. S50, D137, and N149 together coordinate substrate. ATP-binding positions include 169-170 (TD) and 211-217 (TGGMGTK). A PUA domain is found at 275-353 (AGEITVDDGA…QEISEILGYE (79 aa)).

It belongs to the glutamate 5-kinase family.

Its subcellular location is the cytoplasm. The catalysed reaction is L-glutamate + ATP = L-glutamyl 5-phosphate + ADP. The protein operates within amino-acid biosynthesis; L-proline biosynthesis; L-glutamate 5-semialdehyde from L-glutamate: step 1/2. With respect to regulation, proline-mediated feedback inhibition. Functionally, catalyzes the transfer of a phosphate group to glutamate to form L-glutamate 5-phosphate. The chain is Glutamate 5-kinase from Serratia marcescens.